The following is a 119-amino-acid chain: NADH-quinone oxidoreductase subunit A (119 aa).

The next 3 membrane-spanning stretches (helical) occupy residues 7–27 (FPVL…MSIG), 63–83 (LIAI…PWGV), and 88–108 (IGWP…VGFV).

It belongs to the complex I subunit 3 family. NDH-1 is composed of 14 different subunits. Subunits NuoA, H, J, K, L, M, N constitute the membrane sector of the complex.

The protein resides in the cell inner membrane. It carries out the reaction a quinone + NADH + 5 H(+)(in) = a quinol + NAD(+) + 4 H(+)(out). In terms of biological role, NDH-1 shuttles electrons from NADH, via FMN and iron-sulfur (Fe-S) centers, to quinones in the respiratory chain. The immediate electron acceptor for the enzyme in this species is believed to be ubiquinone. Couples the redox reaction to proton translocation (for every two electrons transferred, four hydrogen ions are translocated across the cytoplasmic membrane), and thus conserves the redox energy in a proton gradient. In Cupriavidus pinatubonensis (strain JMP 134 / LMG 1197) (Cupriavidus necator (strain JMP 134)), this protein is NADH-quinone oxidoreductase subunit A.